The following is an 82-amino-acid chain: Small ribosomal subunit protein bS16 (82 aa).

Belongs to the bacterial ribosomal protein bS16 family.

The polypeptide is Small ribosomal subunit protein bS16 (Acidobacterium capsulatum (strain ATCC 51196 / DSM 11244 / BCRC 80197 / JCM 7670 / NBRC 15755 / NCIMB 13165 / 161)).